Reading from the N-terminus, the 74-residue chain is Small ribosomal subunit protein bS18 (74 aa).

It belongs to the bacterial ribosomal protein bS18 family. As to quaternary structure, part of the 30S ribosomal subunit. Forms a tight heterodimer with protein bS6.

Its function is as follows. Binds as a heterodimer with protein bS6 to the central domain of the 16S rRNA, where it helps stabilize the platform of the 30S subunit. The polypeptide is Small ribosomal subunit protein bS18 (Chlorobaculum tepidum (strain ATCC 49652 / DSM 12025 / NBRC 103806 / TLS) (Chlorobium tepidum)).